A 188-amino-acid chain; its full sequence is Cell division protein SepF (188 aa).

Over residues 152–162 the composition is skewed to polar residues; that stretch reads TSHDEASTPTV. Residues 152-188 are disordered; the sequence is TSHDEASTPTVVSRDAEAEQQQEAAAAPSPAWGATAL.

This sequence belongs to the SepF family. Homodimer. Interacts with FtsZ.

The protein resides in the cytoplasm. In terms of biological role, cell division protein that is part of the divisome complex and is recruited early to the Z-ring. Probably stimulates Z-ring formation, perhaps through the cross-linking of FtsZ protofilaments. Its function overlaps with FtsA. This chain is Cell division protein SepF, found in Parasynechococcus marenigrum (strain WH8102).